Here is an 89-residue protein sequence, read N- to C-terminus: Large ribosomal subunit protein bL27 (89 aa).

The interval M1–R20 is disordered.

The protein belongs to the bacterial ribosomal protein bL27 family.

This is Large ribosomal subunit protein bL27 from Rhodopseudomonas palustris (strain HaA2).